Here is a 594-residue protein sequence, read N- to C-terminus: Developmental and secondary metabolism regulator veA (594 aa).

A Velvet domain is found at 24–220; sequence GRRLFYRIDV…AEQGTRVRIR (197 aa). A Nuclear localization signal motif is present at residues 38-43; the sequence is EKCRAC. 2 disordered regions span residues 40–59 and 210–558; these read CRACGSGPKSSTDRRPVDPP and MAEQ…DVEE. Positions 217 to 229 are enriched in basic residues; it reads VRIRRDVRMRRRD. Pro residues predominate over residues 296-307; the sequence is APPPPNPPPPGF. Residues 327–351 show a composition bias toward low complexity; the sequence is SHSQYQQPTSSSSSSEQVSSVPQSP. A compositionally biased stretch (polar residues) spans 352 to 362; sequence AYSSHAAQQHY. Positions 374–383 are enriched in basic and acidic residues; it reads PERRLSDHRS. A compositionally biased stretch (low complexity) spans 384 to 403; sequence SQPNNHPQQSPHQHSYSHRS. The segment covering 405 to 416 has biased composition (basic and acidic residues); the sequence is PQRERFMPDSRR. The tract at residues 457 to 506 is PEST; sequence VADTQATPHLPPIRWPRPNMNLPSPPSEHQEALQPLQPAPLHYESQTHQQ. The segment covering 523-538 has biased composition (low complexity); sequence YSYGYSYSHNHSHGYG.

This sequence belongs to the velvet family. VeA subfamily. As to quaternary structure, component of the heterotrimeric velvet complex composed of LAEA, VEA and VELB; VEA acting as a bridging protein between LAEA and VELB.

The protein resides in the nucleus. It is found in the cytoplasm. Its function is as follows. Component of the velvet transcription factor complex that controls sexual/asexual developmental ratio in response to light, promoting sexual development in the darkness while stimulating asexual sporulation under illumination. The velvet complex acts as a global regulator for secondary metabolite gene expression. Regulates of the response to reactive oxygen species (ROS) stress. The polypeptide is Developmental and secondary metabolism regulator veA (Pyricularia oryzae (strain 70-15 / ATCC MYA-4617 / FGSC 8958) (Rice blast fungus)).